Consider the following 230-residue polypeptide: Exosome complex component Rrp4 (230 aa).

The 70-residue stretch at 60-129 (NDKVIGKVID…EIKESWLSLK (70 aa)) folds into the S1 motif domain. The region spanning 137-195 (EEGSIIYIKAPKVPRVIGKAGNMINMIKSETNTKIIVGQNGLIWIDGEPENVDLAINAI) is the KH domain.

Belongs to the RRP4 family. As to quaternary structure, component of the archaeal exosome complex. Forms a trimer of Rrp4 and/or Csl4 subunits. The trimer associates with a hexameric ring-like arrangement composed of 3 Rrp41-Rrp42 heterodimers.

The protein resides in the cytoplasm. Functionally, non-catalytic component of the exosome, which is a complex involved in RNA degradation. Increases the RNA binding and the efficiency of RNA degradation. Confers strong poly(A) specificity to the exosome. In Picrophilus torridus (strain ATCC 700027 / DSM 9790 / JCM 10055 / NBRC 100828 / KAW 2/3), this protein is Exosome complex component Rrp4.